A 293-amino-acid chain; its full sequence is Glycine--tRNA ligase alpha subunit (293 aa).

Belongs to the class-II aminoacyl-tRNA synthetase family. As to quaternary structure, tetramer of two alpha and two beta subunits.

It localises to the cytoplasm. It catalyses the reaction tRNA(Gly) + glycine + ATP = glycyl-tRNA(Gly) + AMP + diphosphate. The polypeptide is Glycine--tRNA ligase alpha subunit (Prochlorococcus marinus (strain MIT 9211)).